We begin with the raw amino-acid sequence, 467 residues long: Acid phosphatase PHO11 (467 aa).

The N-terminal stretch at 1–17 is a signal peptide; sequence MLKSAVYSILAASLVNA. Catalysis depends on His-75, which acts as the Nucleophile. N-linked (GlcNAc...) asparagine glycosylation is found at Asn-97, Asn-162, Asn-192, Asn-250, and Asn-315. Asp-338 acts as the Proton donor in catalysis. N-linked (GlcNAc...) asparagine glycosylation is found at Asn-356, Asn-390, Asn-439, Asn-445, and Asn-461.

The protein belongs to the histidine acid phosphatase family. In terms of processing, glycosylated during secretion across the membrane.

The enzyme catalyses a phosphate monoester + H2O = an alcohol + phosphate. The sequence is that of Acid phosphatase PHO11 (PHO11) from Saccharomyces cerevisiae (strain ATCC 204508 / S288c) (Baker's yeast).